Here is a 66-residue protein sequence, read N- to C-terminus: Large ribosomal subunit protein bL35 (66 aa).

Residues 1–22 (MAYKLKSHRGAAKRFKKTASGG) form a disordered region.

It belongs to the bacterial ribosomal protein bL35 family.

This is Large ribosomal subunit protein bL35 from Pseudoalteromonas translucida (strain TAC 125).